A 416-amino-acid chain; its full sequence is Serine/threonine transporter SstT (416 aa).

Transmembrane regions (helical) follow at residues 14–34, 43–63, 82–102, 141–161, 192–212, 220–240, 298–318, 339–359, and 363–383; these read GSIV…ALLS, FLGT…VFVL, VLVL…VASF, ALAT…GVAL, IGVF…ALMG, LLGS…FLAI, MAGA…TLGV, ASGV…LFGI, and VAMQ…SAET.

The protein belongs to the dicarboxylate/amino acid:cation symporter (DAACS) (TC 2.A.23) family.

It is found in the cell inner membrane. The enzyme catalyses L-serine(in) + Na(+)(in) = L-serine(out) + Na(+)(out). It catalyses the reaction L-threonine(in) + Na(+)(in) = L-threonine(out) + Na(+)(out). Functionally, involved in the import of serine and threonine into the cell, with the concomitant import of sodium (symport system). This chain is Serine/threonine transporter SstT, found in Laribacter hongkongensis (strain HLHK9).